A 716-amino-acid polypeptide reads, in one-letter code: Phosphoribosylformylglycinamidine synthase subunit PurL (716 aa).

Histidine 34 is an active-site residue. Tyrosine 37 lines the ATP pocket. Glutamate 78 contributes to the Mg(2+) binding site. Substrate-binding positions include 79–82 (SHNH) and arginine 101. Histidine 80 serves as the catalytic Proton acceptor. Aspartate 102 lines the Mg(2+) pocket. Glutamine 226 contacts substrate. Position 254 (aspartate 254) interacts with Mg(2+). 298 to 300 (ESQ) serves as a coordination point for substrate. ATP-binding residues include aspartate 474 and glycine 511. Asparagine 512 lines the Mg(2+) pocket. Serine 514 is a binding site for substrate.

Belongs to the FGAMS family. In terms of assembly, monomer. Part of the FGAM synthase complex composed of 1 PurL, 1 PurQ and 2 PurS subunits.

It is found in the cytoplasm. The enzyme catalyses N(2)-formyl-N(1)-(5-phospho-beta-D-ribosyl)glycinamide + L-glutamine + ATP + H2O = 2-formamido-N(1)-(5-O-phospho-beta-D-ribosyl)acetamidine + L-glutamate + ADP + phosphate + H(+). Its pathway is purine metabolism; IMP biosynthesis via de novo pathway; 5-amino-1-(5-phospho-D-ribosyl)imidazole from N(2)-formyl-N(1)-(5-phospho-D-ribosyl)glycinamide: step 1/2. Part of the phosphoribosylformylglycinamidine synthase complex involved in the purines biosynthetic pathway. Catalyzes the ATP-dependent conversion of formylglycinamide ribonucleotide (FGAR) and glutamine to yield formylglycinamidine ribonucleotide (FGAM) and glutamate. The FGAM synthase complex is composed of three subunits. PurQ produces an ammonia molecule by converting glutamine to glutamate. PurL transfers the ammonia molecule to FGAR to form FGAM in an ATP-dependent manner. PurS interacts with PurQ and PurL and is thought to assist in the transfer of the ammonia molecule from PurQ to PurL. The polypeptide is Phosphoribosylformylglycinamidine synthase subunit PurL (Methanobrevibacter smithii (strain ATCC 35061 / DSM 861 / OCM 144 / PS)).